The sequence spans 173 residues: MVRKPGKMYRNLAKKAYTRRKYMGGVPGSKIVQFEMGNLSQEFPVEISLEVLESCQIRHTALEAARIAINRKMMDQVGRANFHFKIRTYPHHVLRENKQATGAGADRVSEGMRMAFGKAVGTAARVQPKQKVFTVYTNEQYIEKSKDALRHGGYKLPSPARLVIERVPVDNTQ.

It belongs to the universal ribosomal protein uL16 family.

The chain is Large ribosomal subunit protein uL16 from Methanosphaerula palustris (strain ATCC BAA-1556 / DSM 19958 / E1-9c).